A 461-amino-acid polypeptide reads, in one-letter code: Mycosin-3 (461 aa).

Residues 1-25 (MIRAAFACLAATVVVAGWWTPPAWA) form the signal peptide. The region spanning 64 to 397 (DPGVPTPSQT…AGNLDAVAAL (334 aa)) is the Peptidase S8 domain. Catalysis depends on charge relay system residues Asp-95, His-126, and Ser-342. Residues 432–452 (AFAGAAALSVLVGLTAATVAI) traverse the membrane as a helical segment.

It belongs to the peptidase S8 family.

Its subcellular location is the cell membrane. The sequence is that of Mycosin-3 from Mycobacterium tuberculosis (strain ATCC 25618 / H37Rv).